The sequence spans 287 residues: Aquaporin PIP2-1 (287 aa).

Methionine 1 is subject to N-acetylmethionine. The Cytoplasmic segment spans residues 2–39 (AKDVEAVPGEGFQTRDYQDPPPAPFIDGAELKKWSFYR). Position 3 is an N6,N6-dimethyllysine; partial (lysine 3). The chain crosses the membrane as a helical span at residues 40-60 (AVIAEFVATLLFLYITVLTVI). At 61–83 (GYKIQSDTDAGGVDCGGVGILGI) the chain is on the extracellular side. A helical membrane pass occupies residues 84 to 104 (AWAFGGMIFILVYCTAGISGG). The Cytoplasmic segment spans residues 105–125 (HINPAVTFGLFLARKVSLPRA). An NPA 1 motif is present at residues 107-109 (NPA). Residues 126–146 (LLYIIAQCLGAICGVGFVKAF) traverse the membrane as a helical segment. The Extracellular segment spans residues 147–167 (QSSYYTRYGGGANSLADGYST). A helical transmembrane segment spans residues 168–188 (GTGLAAEIIGTFVLVYTVFSA). At 189–201 (TDPKRSARDSHVP) the chain is on the cytoplasmic side. Residues 202–222 (VLAPLPIGFAVFMVHLATIPI) traverse the membrane as a helical segment. At 223–249 (TGTGINPARSFGAAVIYNKSKPWDDHW) the chain is on the extracellular side. The NPA 2 motif lies at 228 to 230 (NPA). The helical transmembrane segment at 250–270 (IFWVGPFIGAAIAAFYHQFVL) threads the bilayer. The Cytoplasmic portion of the chain corresponds to 271–287 (RASGSKSLGSFRSAANV). Phosphoserine is present on residues serine 280 and serine 283.

Belongs to the MIP/aquaporin (TC 1.A.8) family. PIP (TC 1.A.8.11) subfamily. In terms of processing, ubiquitinated by RMA1, leading to proteasomal degradation. Post-translationally, the phosphorylation at Ser-280 and Ser-283 is altered by salt (NaCl) and hydrogen peroxide H(2)O(2) treatments. Phosphorylation of Ser-283 is required for plasma membrane targeting. As to expression, predominantly expressed in roots and green siliques. Also expressed at lower level above ground and in flower buds.

Its subcellular location is the cell membrane. Its function is as follows. Water channel required to facilitate the transport of water across cell membrane. Probably involved in root water uptake. Its function is impaired by Hg(2+). This chain is Aquaporin PIP2-1 (PIP2-1), found in Arabidopsis thaliana (Mouse-ear cress).